Consider the following 331-residue polypeptide: Tagatose 1,6-diphosphate aldolase 2 (331 aa).

Belongs to the aldolase LacD family.

The enzyme catalyses D-tagatofuranose 1,6-bisphosphate = D-glyceraldehyde 3-phosphate + dihydroxyacetone phosphate. It functions in the pathway carbohydrate metabolism; D-tagatose 6-phosphate degradation; D-glyceraldehyde 3-phosphate and glycerone phosphate from D-tagatose 6-phosphate: step 2/2. The polypeptide is Tagatose 1,6-diphosphate aldolase 2 (lacD2) (Enterococcus faecalis (strain ATCC 700802 / V583)).